We begin with the raw amino-acid sequence, 232 residues long: Ubiquinone biosynthesis O-methyltransferase (232 aa).

Arginine 36, glycine 55, aspartate 76, and leucine 120 together coordinate S-adenosyl-L-methionine.

This sequence belongs to the methyltransferase superfamily. UbiG/COQ3 family.

The catalysed reaction is a 3-demethylubiquinol + S-adenosyl-L-methionine = a ubiquinol + S-adenosyl-L-homocysteine + H(+). It carries out the reaction a 3-(all-trans-polyprenyl)benzene-1,2-diol + S-adenosyl-L-methionine = a 2-methoxy-6-(all-trans-polyprenyl)phenol + S-adenosyl-L-homocysteine + H(+). It participates in cofactor biosynthesis; ubiquinone biosynthesis. In terms of biological role, O-methyltransferase that catalyzes the 2 O-methylation steps in the ubiquinone biosynthetic pathway. This is Ubiquinone biosynthesis O-methyltransferase from Pseudomonas syringae pv. tomato (strain ATCC BAA-871 / DC3000).